The following is a 134-amino-acid chain: Large ribosomal subunit protein bL20 (134 aa).

Belongs to the bacterial ribosomal protein bL20 family.

Functionally, binds directly to 23S ribosomal RNA and is necessary for the in vitro assembly process of the 50S ribosomal subunit. It is not involved in the protein synthesizing functions of that subunit. The protein is Large ribosomal subunit protein bL20 of Sinorhizobium medicae (strain WSM419) (Ensifer medicae).